A 132-amino-acid polypeptide reads, in one-letter code: Galectin-2 (132 aa).

The region spanning 4-131 (ELEVKNMDMK…GFNMSSFKLK (128 aa)) is the Galectin domain. 65–71 (WGQEQRE) contributes to the a beta-D-galactoside binding site.

Homodimer.

Its function is as follows. This protein binds beta-galactoside. Its physiological function is not yet known. The chain is Galectin-2 (LGALS2) from Homo sapiens (Human).